A 374-amino-acid polypeptide reads, in one-letter code: tRNA-specific 2-thiouridylase MnmA (374 aa).

Residues 15–22 and Met41 contribute to the ATP site; that span reads GMSGGVDS. Residues 101–103 are interaction with target base in tRNA; sequence NPD. Cys106 functions as the Nucleophile in the catalytic mechanism. Cysteines 106 and 206 form a disulfide. Gly130 is a binding site for ATP. The interaction with tRNA stretch occupies residues 156-158; sequence KDQ. Cys206 acts as the Cysteine persulfide intermediate in catalysis. An interaction with tRNA region spans residues 324-325; that stretch reads RY.

The protein belongs to the MnmA/TRMU family.

The protein localises to the cytoplasm. It carries out the reaction S-sulfanyl-L-cysteinyl-[protein] + uridine(34) in tRNA + AH2 + ATP = 2-thiouridine(34) in tRNA + L-cysteinyl-[protein] + A + AMP + diphosphate + H(+). In terms of biological role, catalyzes the 2-thiolation of uridine at the wobble position (U34) of tRNA, leading to the formation of s(2)U34. The sequence is that of tRNA-specific 2-thiouridylase MnmA from Aromatoleum aromaticum (strain DSM 19018 / LMG 30748 / EbN1) (Azoarcus sp. (strain EbN1)).